A 234-amino-acid chain; its full sequence is Triosephosphate isomerase (234 aa).

8-10 (NFK) serves as a coordination point for substrate. Residue histidine 90 is the Electrophile of the active site. Residue glutamate 159 is the Proton acceptor of the active site. Substrate contacts are provided by glycine 165 and serine 197.

It belongs to the triosephosphate isomerase family. As to quaternary structure, homodimer.

It localises to the cytoplasm. The catalysed reaction is D-glyceraldehyde 3-phosphate = dihydroxyacetone phosphate. It functions in the pathway carbohydrate biosynthesis; gluconeogenesis. It participates in carbohydrate degradation; glycolysis; D-glyceraldehyde 3-phosphate from glycerone phosphate: step 1/1. Functionally, involved in the gluconeogenesis. Catalyzes stereospecifically the conversion of dihydroxyacetone phosphate (DHAP) to D-glyceraldehyde-3-phosphate (G3P). In Helicobacter acinonychis (strain Sheeba), this protein is Triosephosphate isomerase.